Consider the following 346-residue polypeptide: 3 beta-hydroxysteroid dehydrogenase/Delta 5--&gt;4-isomerase (346 aa).

The active-site Proton acceptor is Y147. K151 contacts NAD(+).

It belongs to the 3-beta-HSD family.

The enzyme catalyses a 3beta-hydroxy-Delta(5)-steroid + NAD(+) = a 3-oxo-Delta(5)-steroid + NADH + H(+). It carries out the reaction a 3-oxo-Delta(5)-steroid = a 3-oxo-Delta(4)-steroid. It functions in the pathway lipid metabolism; steroid biosynthesis. Functionally, catalyzes the oxidative conversion of Delta(5)-ene-3-beta-hydroxy steroid, and the oxidative conversion of ketosteroids. The 3-beta-HSD enzymatic system plays a crucial role in the biosynthesis of all classes of hormonal steroids. During viral infection, steroid production contributes to virulence by inhibiting the host inflammatory response. The sequence is that of 3 beta-hydroxysteroid dehydrogenase/Delta 5--&gt;4-isomerase (OPG174) from Monkeypox virus.